The sequence spans 320 residues: tRNA uridine(34) hydroxylase (320 aa).

One can recognise a Rhodanese domain in the interval 123 to 217; it reads EDENTVILDA…YGKDPETKGQ (95 aa). The active-site Cysteine persulfide intermediate is the C177.

The protein belongs to the TrhO family.

The catalysed reaction is uridine(34) in tRNA + AH2 + O2 = 5-hydroxyuridine(34) in tRNA + A + H2O. Functionally, catalyzes oxygen-dependent 5-hydroxyuridine (ho5U) modification at position 34 in tRNAs. The chain is tRNA uridine(34) hydroxylase from Staphylococcus epidermidis (strain ATCC 12228 / FDA PCI 1200).